The primary structure comprises 412 residues: Thyroxine-binding globulin (412 aa).

The signal sequence occupies residues 1 to 16; it reads MPLFFSLVLLILGLHC. N-linked (GlcNAc...) asparagine glycosylation is found at N35, N98, N164, and N252. Thyroxine contacts are provided by N292 and K395.

Belongs to the serpin family. Expressed by the liver and secreted in plasma.

Its subcellular location is the secreted. Functionally, major thyroid hormone transport protein in serum. The protein is Thyroxine-binding globulin (SERPINA7) of Ovis aries (Sheep).